A 176-amino-acid polypeptide reads, in one-letter code: Peroxynitrite isomerase 1 (176 aa).

Positions 1 to 23 (MDENSTLSPAHSDAAASSSANTP) are disordered. The segment covering 8 to 20 (SPAHSDAAASSSA) has biased composition (low complexity). The GXWXGXG signature appears at 37–43 (GLWRGEG). Residue His168 participates in heme b binding.

It belongs to the nitrobindin family. In terms of assembly, homodimer. It depends on heme b as a cofactor.

The enzyme catalyses peroxynitrite = nitrate. Its pathway is nitrogen metabolism. Its function is as follows. Heme-binding protein able to scavenge peroxynitrite and to protect free L-tyrosine against peroxynitrite-mediated nitration, by acting as a peroxynitrite isomerase that converts peroxynitrite to nitrate. Therefore, this protein likely plays a role in peroxynitrite sensing and in the detoxification of reactive nitrogen and oxygen species (RNS and ROS, respectively). Is able to bind nitric oxide (NO) in vitro, but may act as a sensor of peroxynitrite levels in vivo. In Rhodococcus jostii (strain RHA1), this protein is Peroxynitrite isomerase 1.